A 356-amino-acid chain; its full sequence is Protein RecA (356 aa).

Position 68-75 (68-75) interacts with ATP; it reads GQESSGKT.

This sequence belongs to the RecA family.

It is found in the cytoplasm. Its function is as follows. Can catalyze the hydrolysis of ATP in the presence of single-stranded DNA, the ATP-dependent uptake of single-stranded DNA by duplex DNA, and the ATP-dependent hybridization of homologous single-stranded DNAs. It interacts with LexA causing its activation and leading to its autocatalytic cleavage. This is Protein RecA from Thermotoga sp. (strain RQ2).